The chain runs to 132 residues: Small ribosomal subunit protein uS11 (132 aa).

The protein belongs to the universal ribosomal protein uS11 family. Part of the 30S ribosomal subunit. Interacts with proteins S7 and S18. Binds to IF-3.

Located on the platform of the 30S subunit, it bridges several disparate RNA helices of the 16S rRNA. Forms part of the Shine-Dalgarno cleft in the 70S ribosome. This Chlamydia abortus (strain DSM 27085 / S26/3) (Chlamydophila abortus) protein is Small ribosomal subunit protein uS11.